The primary structure comprises 307 residues: UDP-N-acetylenolpyruvoylglucosamine reductase (307 aa).

Residues 34–197 enclose the FAD-binding PCMH-type domain; sequence VGGNAEALFR…LSASLKGRPG (164 aa). Arg-177 is an active-site residue. Catalysis depends on Ser-226, which acts as the Proton donor. The active site involves Glu-296.

Belongs to the MurB family. FAD is required as a cofactor.

The protein resides in the cytoplasm. It catalyses the reaction UDP-N-acetyl-alpha-D-muramate + NADP(+) = UDP-N-acetyl-3-O-(1-carboxyvinyl)-alpha-D-glucosamine + NADPH + H(+). It functions in the pathway cell wall biogenesis; peptidoglycan biosynthesis. Its function is as follows. Cell wall formation. The sequence is that of UDP-N-acetylenolpyruvoylglucosamine reductase from Paramagnetospirillum magneticum (strain ATCC 700264 / AMB-1) (Magnetospirillum magneticum).